A 1141-amino-acid chain; its full sequence is Serine-aspartate repeat-containing protein E (1141 aa).

The first 52 residues, 1 to 52 (MINRDNKKAITKKGMISNRLNKFSIRKYTVGTASILVGTTLIFGLGNQEAKA), serve as a signal peptide directing secretion. The YSIRK-G/S signaling motif motif lies at 23 to 34 (FSIRKYTVGTAS). The tract at residues 53–601 (AENTSTENAK…GDGTVKPEEK (549 aa)) is ligand binding A region. The tract at residues 54 to 248 (ENTSTENAKQ…RSTKPVATAP (195 aa)) is disordered. Residues 61-75 (AKQDDATTSDNKEVV) are compositionally biased toward basic and acidic residues. A compositionally biased stretch (low complexity) spans 77 to 90 (ETENNSTTENDSTN). Residues 92-108 (IKKETNTDSQPEAKEES) are compositionally biased toward basic and acidic residues. A compositionally biased stretch (low complexity) spans 109-126 (TTSSTQQQQNNVTATTET). The segment covering 130 to 145 (NIEKENVKPSTDKTAT) has biased composition (basic and acidic residues). The segment covering 159-207 (NYTNNDVTTKPSTSEIQTKPTTPQESTNIENSQPQPTPSKVDNQVTDAT) has biased composition (polar residues). Residues 216–241 (SKEELKNNPEKLKELVRNDNNTDRST) are compositionally biased toward basic and acidic residues. CNA-B domains are found at residues 602–714 (LYKI…YKEP), 715–824 (KYNL…YKTP), and 825–935 (KYSL…EEDT). Residues 929-1117 (GYFEEDTSDS…GSENNGSNNA (189 aa)) form a disordered region. A compositionally biased stretch (acidic residues) spans 930 to 1080 (YFEEDTSDSD…DSDSDSDSDS (151 aa)). The LPXTG sorting signal motif lies at 1104 to 1108 (LPETG). At Thr-1107 the chain carries Pentaglycyl murein peptidoglycan amidated threonine. A propeptide spans 1108-1141 (GSENNGSNNATLFGGLFAALGSLLLFGRRKKQNK) (removed by sortase).

It belongs to the serine-aspartate repeat-containing protein (SDr) family. As to quaternary structure, interacts with host complement factor H/CFAH (via C-terminus). Interacts with host complement regulator C4BPA.

It is found in the secreted. The protein localises to the cell wall. Functionally, cell surface-associated calcium-binding protein which plays an important role in adhesion and pathogenesis. Contributes to the resistance to killing by innate immune components in blood and thus attenuates bacterial clearance by interacting with host complement factor H/CFAH and modulating its activity. Inhibits also bacterial opsonization and killing by interacting with host complement regulator C4BPA and thus inhibiting classical complement pathway activation. The polypeptide is Serine-aspartate repeat-containing protein E (sdrE) (Staphylococcus aureus (strain Mu50 / ATCC 700699)).